We begin with the raw amino-acid sequence, 218 residues long: Ras-related protein Rab11E (218 aa).

20–27 contacts GTP; sequence GDSGVGKS. The short motif at 42–50 is the Effector region element; the sequence is SKSTIGVEF. Residues 68–72 and 126–129 each bind GTP; these read DTAGQ and NKSD. S-geranylgeranyl cysteine attachment occurs at residues cysteine 215 and cysteine 216.

It belongs to the small GTPase superfamily. Rab family.

The protein resides in the cell membrane. The polypeptide is Ras-related protein Rab11E (RAB11E) (Lotus japonicus (Lotus corniculatus var. japonicus)).